The sequence spans 408 residues: Succinylornithine transaminase (408 aa).

Lysine 252 bears the N6-(pyridoxal phosphate)lysine mark.

The protein belongs to the class-III pyridoxal-phosphate-dependent aminotransferase family. AstC subfamily. Requires pyridoxal 5'-phosphate as cofactor.

The enzyme catalyses N(2)-succinyl-L-ornithine + 2-oxoglutarate = N-succinyl-L-glutamate 5-semialdehyde + L-glutamate. It functions in the pathway amino-acid degradation; L-arginine degradation via AST pathway; L-glutamate and succinate from L-arginine: step 3/5. Functionally, catalyzes the transamination of N(2)-succinylornithine and alpha-ketoglutarate into N(2)-succinylglutamate semialdehyde and glutamate. Can also act as an acetylornithine aminotransferase. This chain is Succinylornithine transaminase, found in Salmonella newport (strain SL254).